The primary structure comprises 456 residues: RuvB-like 1 (456 aa).

The tract at residues Met-1–His-20 is disordered. Gly-70 to Thr-77 contacts ATP.

This sequence belongs to the RuvB family. In terms of assembly, forms homohexameric rings. Can form a dodecamer with ruvbl2 made of two stacked hexameric rings. Is a component of the RNA polymerase II holoenzyme complex. Component of the chromatin-remodeling Ino80 complex. Component of some MLL1/MLL complex.

The protein localises to the nucleus. It localises to the dynein axonemal particle. It carries out the reaction ATP + H2O = ADP + phosphate + H(+). Has single-stranded DNA-stimulated ATPase and ATP-dependent DNA helicase (3' to 5') activity suggesting a role in nuclear processes such as recombination and transcription. Proposed core component of the chromatin remodeling Ino80 complex which exhibits DNA- and nucleosome-activated ATPase activity and catalyzes ATP-dependent nucleosome sliding. May act as a negative regulator of embryonic heart growth. This Danio rerio (Zebrafish) protein is RuvB-like 1 (ruvbl1).